We begin with the raw amino-acid sequence, 132 residues long: Fatty acid-binding protein, adipocyte (132 aa).

Cys-2 is modified (N-acetylcysteine). Ser-13 bears the Phosphoserine mark. Residue Tyr-20 is modified to Phosphotyrosine; by Tyr-kinases. The Nuclear localization signal motif lies at Lys-22–Lys-32. Residue Arg-127–Tyr-129 participates in a fatty acid binding.

Belongs to the calycin superfamily. Fatty-acid binding protein (FABP) family. As to quaternary structure, monomer. Homodimer. Interacts with PPARG.

The protein localises to the cytoplasm. It is found in the nucleus. In terms of biological role, lipid transport protein in adipocytes. Binds both long chain fatty acids and retinoic acid. Delivers long-chain fatty acids and retinoic acid to their cognate receptors in the nucleus. This chain is Fatty acid-binding protein, adipocyte (FABP4), found in Cervus elaphus (Red deer).